A 236-amino-acid chain; its full sequence is Ribose-5-phosphate isomerase (236 aa).

Residues 27–30 (TGST), 84–87 (DGTD), and 97–100 (KGRG) contribute to the substrate site. The active-site Proton acceptor is Glu106. Residue Lys124 coordinates substrate.

This sequence belongs to the ribose 5-phosphate isomerase family. As to quaternary structure, homodimer.

It catalyses the reaction aldehydo-D-ribose 5-phosphate = D-ribulose 5-phosphate. The protein operates within carbohydrate degradation; pentose phosphate pathway; D-ribose 5-phosphate from D-ribulose 5-phosphate (non-oxidative stage): step 1/1. In terms of biological role, involved in the first step of the non-oxidative branch of the pentose phosphate pathway. It catalyzes the reversible conversion of ribose-5-phosphate to ribulose 5-phosphate. The sequence is that of Ribose-5-phosphate isomerase from Plasmodium falciparum (isolate 3D7).